The following is a 397-amino-acid chain: Ribosomal RNA large subunit methyltransferase I (397 aa).

Positions 2-81 constitute a PUA domain; that stretch reads STTVYLQKDR…EQIDTEFFVR (80 aa).

It belongs to the methyltransferase superfamily. RlmI family.

It is found in the cytoplasm. The catalysed reaction is cytidine(1962) in 23S rRNA + S-adenosyl-L-methionine = 5-methylcytidine(1962) in 23S rRNA + S-adenosyl-L-homocysteine + H(+). Specifically methylates the cytosine at position 1962 (m5C1962) of 23S rRNA. In Tolumonas auensis (strain DSM 9187 / NBRC 110442 / TA 4), this protein is Ribosomal RNA large subunit methyltransferase I.